We begin with the raw amino-acid sequence, 183 residues long: MPLSVEQALANFSQRYVEAWKAQHDCLPINEELVGLASPCIEETRDLEISWQPIVRDEAIRLHNIEQGIELDLHDDFHAFYGTQYSADMTAKFEDMNIELLQVWSDEDLERLQGNMLGHLVMQRRLKLVPTLFVAVTDDEMEVVSICNQSGEVILERVGTKNRTVLAANMAEFLNKLEPVIAA.

It belongs to the Syd family.

The protein localises to the cell inner membrane. Interacts with the SecY protein in vivo. May bind preferentially to an uncomplexed state of SecY, thus functioning either as a chelating agent for excess SecY in the cell or as a regulatory factor that negatively controls the translocase function. The protein is Protein Syd of Aliivibrio fischeri (strain MJ11) (Vibrio fischeri).